We begin with the raw amino-acid sequence, 311 residues long: Ferritin-like catalase Nec2 (311 aa).

The first 25 residues, 1-25, serve as a signal peptide directing secretion; sequence MAFLSNMAMFITMLMFSSMMHPCFS. Asn128, Asn257, and Asn289 each carry an N-linked (GlcNAc...) asparagine glycan.

As to quaternary structure, forms homomultimers. As to expression, observed in all flowers organs; mainly expressed in nectaries and, to a lower extent, in petals and ovules, as well as in stigmas and calyx at low levels.

It catalyses the reaction 2 H2O2 = O2 + 2 H2O. Its function is as follows. Involved in the production of blood-red nectar containing the alkaloid nesocodin and that serves as a visual attractant for pollinator visitation, including vertebrates such as Phelsuma geckos. The nectar is initially acidic and pale yellow, but slowly becomes alkaline before turning into red within 24 hours. Together with NEC1 and NEC3, facilitates the condensation of sinapaldehyde ((E)-3,5-dimethoxy-4-hydroxycinnamaldehyde) and proline to form nesocodin, a pigment with a stable imine bond. Protects nesocodin from degradation by hydrogen peroxide H(2)O(2) by catalyzing the degradation of H(2)O(2) into water H(2)O and dioxygene O(2). This Nesocodon mauritianus (Blue Mauritius bellflower) protein is Ferritin-like catalase Nec2.